The primary structure comprises 421 residues: Testin (421 aa).

Positions 92 to 199 (MILTNPVAAK…GDVKLPCEMD (108 aa)) constitute a PET domain. The tract at residues 133–164 (EKQPVAGSEGAQYRKKQLAKQLPAHDQDPSKC) is disordered. Residues 155-164 (PAHDQDPSKC) show a composition bias toward basic and acidic residues. LIM zinc-binding domains follow at residues 234-297 (YSCY…CDSE), 299-359 (PRCA…NHAV), and 362-421 (QGCH…KMMS).

The protein belongs to the prickle / espinas / testin family. As to quaternary structure, interacts via LIM domain 1 with ZYX. Interacts (via LIM domain 3) with ENAH and VASP. Interacts with ALKBH4, talin, actin, alpha-actinin, GRIP1 and PXN. Interacts (via LIM domain 2) with ACTL7A (via N-terminus). Heterodimer with ACTL7A; the heterodimer interacts with ENAH to form a heterotrimer.

It localises to the cytoplasm. The protein resides in the cell junction. The protein localises to the focal adhesion. Functionally, scaffold protein that may play a role in cell adhesion, cell spreading and in the reorganization of the actin cytoskeleton. Plays a role in the regulation of cell proliferation. May act as a tumor suppressor. This Papio anubis (Olive baboon) protein is Testin (TES).